The chain runs to 71 residues: Exodeoxyribonuclease 7 small subunit (71 aa).

This sequence belongs to the XseB family. Heterooligomer composed of large and small subunits.

Its subcellular location is the cytoplasm. It carries out the reaction Exonucleolytic cleavage in either 5'- to 3'- or 3'- to 5'-direction to yield nucleoside 5'-phosphates.. Bidirectionally degrades single-stranded DNA into large acid-insoluble oligonucleotides, which are then degraded further into small acid-soluble oligonucleotides. This chain is Exodeoxyribonuclease 7 small subunit, found in Streptococcus equi subsp. equi (strain 4047).